We begin with the raw amino-acid sequence, 65 residues long: Light-harvesting protein B800/830/1020 alpha-2 chain (65 aa).

The Cytoplasmic segment spans residues methionine 1–threonine 13. The helical transmembrane segment at alanine 14–serine 34 threads the bilayer. Histidine 29 lines the a bacteriochlorophyll pocket. Topologically, residues serine 35–glycine 65 are periplasmic.

This sequence belongs to the antenna complex alpha subunit family. In terms of assembly, the core complex is formed by different alpha and beta chains, binding bacteriochlorophyll molecules, and arranged most probably in tetrameric structures disposed around the reaction center. The non-pigmented gamma chains may constitute additional components.

Its subcellular location is the cell inner membrane. Its function is as follows. Antenna complexes are light-harvesting systems, which transfer the excitation energy to the reaction centers. In Halorhodospira halochloris (Ectothiorhodospira halochloris), this protein is Light-harvesting protein B800/830/1020 alpha-2 chain.